Reading from the N-terminus, the 495-residue chain is ATP-dependent RNA helicase dbp3 (495 aa).

The span at 1–14 shows a compositional bias: basic and acidic residues; the sequence is MAKRELQDKGSTEH. The segment at 1–49 is disordered; it reads MAKRELQDKGSTEHRAKKKSRNEKHTKKAEDSQASAQSSETQYTDPKEP. Positions 15 to 27 are enriched in basic residues; it reads RAKKKSRNEKHTK. Residues 97–105 carry the Q motif motif; that stretch reads SFTSPTAIQ. The 176-residue stretch at 109–284 folds into the Helicase ATP-binding domain; that stretch reads WPFLFSGRDV…ATFMTSPVTV (176 aa). 122–129 provides a ligand contact to ATP; that stretch reads AETGSGKT. Positions 231-234 match the DEAD box motif; it reads DEAD. The 150-residue stretch at 315–464 folds into the Helicase C-terminal domain; the sequence is RLVQLLNKYQ…DVPEDLLKFG (150 aa).

Belongs to the DEAD box helicase family. DDX5/DBP2 subfamily.

It localises to the nucleus. The protein localises to the nucleolus. The enzyme catalyses ATP + H2O = ADP + phosphate + H(+). In terms of biological role, ATP-dependent RNA helicase required for 60S ribosomal subunit synthesis. Involved in efficient pre-rRNA processing, predominantly at site A3, which is necessary for the normal formation of 25S and 5.8S rRNAs. In Aspergillus niger (strain ATCC MYA-4892 / CBS 513.88 / FGSC A1513), this protein is ATP-dependent RNA helicase dbp3 (dbp3).